We begin with the raw amino-acid sequence, 125 residues long: Small ribosomal subunit protein uS12 (125 aa).

Aspartate 89 bears the 3-methylthioaspartic acid mark.

It belongs to the universal ribosomal protein uS12 family. As to quaternary structure, part of the 30S ribosomal subunit. Contacts proteins S8 and S17. May interact with IF1 in the 30S initiation complex.

Its function is as follows. With S4 and S5 plays an important role in translational accuracy. Interacts with and stabilizes bases of the 16S rRNA that are involved in tRNA selection in the A site and with the mRNA backbone. Located at the interface of the 30S and 50S subunits, it traverses the body of the 30S subunit contacting proteins on the other side and probably holding the rRNA structure together. The combined cluster of proteins S8, S12 and S17 appears to hold together the shoulder and platform of the 30S subunit. The polypeptide is Small ribosomal subunit protein uS12 (Cupriavidus necator (strain ATCC 17699 / DSM 428 / KCTC 22496 / NCIMB 10442 / H16 / Stanier 337) (Ralstonia eutropha)).